A 433-amino-acid polypeptide reads, in one-letter code: Epi-neemfruitin B synthase L1AT (433 aa).

Catalysis depends on proton acceptor residues His-151 and Asp-372.

It belongs to the plant acyltransferase family. As to quaternary structure, monomer. In terms of tissue distribution, mainly expressed in petioles and, to a lower extent, in roots.

The enzyme catalyses (21S)-21-acetyl-1-hydroxy-apo-melianone + acetyl-CoA = epi-neemfruitin B + acetate + CoA + H(+). The protein operates within secondary metabolite biosynthesis; terpenoid biosynthesis. Functionally, acetyltransferase involved in the biosynthesis of limonoids triterpene natural products such as azadirachtin, an antifeedant widely used as bioinsecticide, and possessing many medicinal applications including anti-tumoral, anti-malarial, anti-rheumatic, antibacterial, anti-inflammatory, anti-pyretic and diuretic effects. Catalyzes the formation of epi-neemfruitin B from (21S)-21-acetyl-1-hydroxy-apo-melianone. In Melia azedarach (Chinaberry tree), this protein is Epi-neemfruitin B synthase L1AT.